The sequence spans 752 residues: Polyribonucleotide nucleotidyltransferase (752 aa).

Mg(2+) contacts are provided by aspartate 519 and aspartate 525. In terms of domain architecture, KH spans 585-644; it reads PRVIAVKIPVDKIGEVIGPKGKMINQIQEDTGADISIEDDGTVYIGATNGPSADAARSAI. Positions 656 to 728 constitute an S1 motif domain; that stretch reads GERYLGTVVK…DRGKLSLSPV (73 aa). The disordered stretch occupies residues 727-752; the sequence is PVVAEEEGAEGAERAHATEPAEGAEI.

This sequence belongs to the polyribonucleotide nucleotidyltransferase family. Requires Mg(2+) as cofactor.

It is found in the cytoplasm. The enzyme catalyses RNA(n+1) + phosphate = RNA(n) + a ribonucleoside 5'-diphosphate. Involved in mRNA degradation. Catalyzes the phosphorolysis of single-stranded polyribonucleotides processively in the 3'- to 5'-direction. In Pseudarthrobacter chlorophenolicus (strain ATCC 700700 / DSM 12829 / CIP 107037 / JCM 12360 / KCTC 9906 / NCIMB 13794 / A6) (Arthrobacter chlorophenolicus), this protein is Polyribonucleotide nucleotidyltransferase.